Here is a 135-residue protein sequence, read N- to C-terminus: Ribonuclease P protein component (135 aa).

It belongs to the RnpA family. Consists of a catalytic RNA component (M1 or rnpB) and a protein subunit.

The enzyme catalyses Endonucleolytic cleavage of RNA, removing 5'-extranucleotides from tRNA precursor.. In terms of biological role, RNaseP catalyzes the removal of the 5'-leader sequence from pre-tRNA to produce the mature 5'-terminus. It can also cleave other RNA substrates such as 4.5S RNA. The protein component plays an auxiliary but essential role in vivo by binding to the 5'-leader sequence and broadening the substrate specificity of the ribozyme. The sequence is that of Ribonuclease P protein component from Saccharophagus degradans (strain 2-40 / ATCC 43961 / DSM 17024).